We begin with the raw amino-acid sequence, 431 residues long: Argininosuccinate lyase (431 aa).

The protein belongs to the lyase 1 family. Argininosuccinate lyase subfamily.

It is found in the cytoplasm. The catalysed reaction is 2-(N(omega)-L-arginino)succinate = fumarate + L-arginine. The protein operates within amino-acid biosynthesis; L-arginine biosynthesis; L-arginine from L-ornithine and carbamoyl phosphate: step 3/3. The protein is Argininosuccinate lyase of Xanthomonas oryzae pv. oryzae (strain MAFF 311018).